The chain runs to 254 residues: Probable transcriptional regulatory protein HDEF_0869 (254 aa).

Residues 1–20 form a disordered region; the sequence is MAGHSKWANTKHRKAAQDAK.

The protein belongs to the TACO1 family.

The protein resides in the cytoplasm. This is Probable transcriptional regulatory protein HDEF_0869 from Hamiltonella defensa subsp. Acyrthosiphon pisum (strain 5AT).